The following is a 623-amino-acid chain: F-box protein FBX14 (623 aa).

Positions 18–48 (LNLNPPCSSSSSSSSAATFTNKSRNFKSSPP) are disordered. Residues 33–45 (AATFTNKSRNFKS) show a composition bias toward polar residues. An F-box domain is found at 54 to 97 (VLENVLENVLQFLTSRCDRNAVSLVCRSWYRVEAQTRLEVFIGN). 1D-myo-inositol hexakisphosphate is bound at residue Lys-119. Positions 126 to 127 (DF) are interaction with auxin-responsive proteins. 1D-myo-inositol hexakisphosphate contacts are provided by residues 158 to 159 (KR) and Arg-391. The interaction with auxin-responsive proteins stretch occupies residues 394 to 399 (PFDPRE). 447–449 (VFR) is a binding site for 1D-myo-inositol hexakisphosphate. The segment at 451-455 (CIMGR) is interaction with auxin-responsive proteins. Arg-482 contributes to the 1D-myo-inositol hexakisphosphate binding site. Residues 510 to 511 (AF) form an interaction with auxin-responsive proteins region. Residues 530–531 (QK) and Arg-555 each bind 1D-myo-inositol hexakisphosphate.

As to quaternary structure, part of a SCF (SKP1-cullin-F-box) protein ligase complex. May interact with auxin and auxin-responsive proteins.

It localises to the nucleus. The protein operates within protein modification; protein ubiquitination. The polypeptide is F-box protein FBX14 (FBX14) (Arabidopsis thaliana (Mouse-ear cress)).